Here is a 124-residue protein sequence, read N- to C-terminus: UPF0231 protein Sama_0645 (124 aa).

The protein belongs to the UPF0231 family.

This Shewanella amazonensis (strain ATCC BAA-1098 / SB2B) protein is UPF0231 protein Sama_0645.